The following is a 120-amino-acid chain: NAD(P)H-quinone oxidoreductase subunit 3 (120 aa).

3 helical membrane-spanning segments follow: residues 6 to 26, 64 to 84, and 89 to 109; these read GYDA…LALI, MFAL…PWAV, and LGVL…VALA.

The protein belongs to the complex I subunit 3 family. In terms of assembly, NDH-1 can be composed of about 15 different subunits; different subcomplexes with different compositions have been identified which probably have different functions.

It localises to the cellular thylakoid membrane. It carries out the reaction a plastoquinone + NADH + (n+1) H(+)(in) = a plastoquinol + NAD(+) + n H(+)(out). The catalysed reaction is a plastoquinone + NADPH + (n+1) H(+)(in) = a plastoquinol + NADP(+) + n H(+)(out). Functionally, NDH-1 shuttles electrons from an unknown electron donor, via FMN and iron-sulfur (Fe-S) centers, to quinones in the respiratory and/or the photosynthetic chain. The immediate electron acceptor for the enzyme in this species is believed to be plastoquinone. Couples the redox reaction to proton translocation, and thus conserves the redox energy in a proton gradient. Cyanobacterial NDH-1 also plays a role in inorganic carbon-concentration. This Parasynechococcus marenigrum (strain WH8102) protein is NAD(P)H-quinone oxidoreductase subunit 3.